The chain runs to 195 residues: CASP-like protein 1B1 (195 aa).

At 1–25 the chain is on the cytoplasmic side; it reads MDLEKGKKPSEQAAACRIMQVKDKL. The chain crosses the membrane as a helical span at residues 26–46; the sequence is ITLQPVVRACVFLATAVAAVI. Topologically, residues 47–78 are extracellular; it reads MGLNKQSYTTVVAIVGTRPVTQTFTAKFKDTP. A helical transmembrane segment spans residues 79–99; it reads AFVFFVIANAIASGYNLMVLV. Topologically, residues 100-114 are cytoplasmic; that stretch reads TRRILQRRAQSLSVH. Residues 115 to 135 form a helical membrane-spanning segment; the sequence is LLDMVILTLLATGSATAASMA. Topologically, residues 136-160 are extracellular; it reads QLGKNGNLHARWNPICDKFGSFCNH. The helical transmembrane segment at 161–181 threads the bilayer; that stretch reads GGIALMSSFIGVALMLALNLL. At 182-195 the chain is on the cytoplasmic side; sequence SAAANSPRSNVTGQ.

This sequence belongs to the Casparian strip membrane proteins (CASP) family. In terms of assembly, homodimer and heterodimers.

Its subcellular location is the cell membrane. The chain is CASP-like protein 1B1 from Oryza sativa subsp. indica (Rice).